Consider the following 320-residue polypeptide: Malate dehydrogenase (320 aa).

NAD(+)-binding positions include 10–15 (GSGMIG) and Asp34. Positions 83 and 89 each coordinate substrate. NAD(+) is bound by residues Asn96 and 119–121 (ITN). Substrate contacts are provided by Asn121 and Arg152. The active-site Proton acceptor is His176.

It belongs to the LDH/MDH superfamily. MDH type 3 family.

It catalyses the reaction (S)-malate + NAD(+) = oxaloacetate + NADH + H(+). Catalyzes the reversible oxidation of malate to oxaloacetate. This chain is Malate dehydrogenase, found in Rhizobium etli (strain CIAT 652).